Consider the following 602-residue polypeptide: Elongation factor 4 (602 aa).

Positions 7–189 (KYIRNFSIVA…AIVSKVPAPY (183 aa)) constitute a tr-type G domain. GTP-binding positions include 19 to 24 (DHGKST) and 136 to 139 (NKID).

Belongs to the TRAFAC class translation factor GTPase superfamily. Classic translation factor GTPase family. LepA subfamily.

It is found in the cell membrane. It carries out the reaction GTP + H2O = GDP + phosphate + H(+). Required for accurate and efficient protein synthesis under certain stress conditions. May act as a fidelity factor of the translation reaction, by catalyzing a one-codon backward translocation of tRNAs on improperly translocated ribosomes. Back-translocation proceeds from a post-translocation (POST) complex to a pre-translocation (PRE) complex, thus giving elongation factor G a second chance to translocate the tRNAs correctly. Binds to ribosomes in a GTP-dependent manner. The sequence is that of Elongation factor 4 from Clostridium botulinum (strain Loch Maree / Type A3).